Consider the following 293-residue polypeptide: MDLRRFITLKTVVEEGSFLRASQKLCCTQSTVTFHIQQLEQEFSVQLFEKIGRRMCLTREGKKLLPHIYELTRVMDTLREAAKKESDPDGELRVVSGETLLSYRMPQVLQRFRQRAPKVRLSLQSLNCYVIRDALLNDEADVGVFYRVGNDDALNRRELGEQSLVLVASPQIADVDFTEPGRHNACSFIINEPQCVFRQIFESTLRQRRITVENTIELISIESIKRCVAANIGVSYLPRFAVAKELECGELIELPFGEQSQTITAMCAHHAGKAVSPAMHTFIQCVEESFVAG.

The HTH lysR-type domain maps to 1–58 (MDLRRFITLKTVVEEGSFLRASQKLCCTQSTVTFHIQQLEQEFSVQLFEKIGRRMCLT). Positions 18-37 (FLRASQKLCCTQSTVTFHIQ) form a DNA-binding region, H-T-H motif.

This sequence belongs to the LysR transcriptional regulatory family.

This is an uncharacterized protein from Escherichia coli (strain K12).